Here is a 277-residue protein sequence, read N- to C-terminus: Large ribosomal subunit protein uL2 (277 aa).

Residues 225-277 (MNPVDHPHGGGEGKTSGGRNSVTPWGVPTKGKKTRKRGKHSDKYIKVSSVRKR) form a disordered region. Over residues 254–264 (KGKKTRKRGKH) the composition is skewed to basic residues.

This sequence belongs to the universal ribosomal protein uL2 family. In terms of assembly, part of the 50S ribosomal subunit. Forms a bridge to the 30S subunit in the 70S ribosome.

One of the primary rRNA binding proteins. Required for association of the 30S and 50S subunits to form the 70S ribosome, for tRNA binding and peptide bond formation. It has been suggested to have peptidyltransferase activity; this is somewhat controversial. Makes several contacts with the 16S rRNA in the 70S ribosome. The protein is Large ribosomal subunit protein uL2 of Anaplasma marginale (strain Florida).